Consider the following 288-residue polypeptide: UTP--glucose-1-phosphate uridylyltransferase (288 aa).

The protein belongs to the UDPGP type 2 family.

It carries out the reaction alpha-D-glucose 1-phosphate + UTP + H(+) = UDP-alpha-D-glucose + diphosphate. Its pathway is glycolipid metabolism; diglucosyl-diacylglycerol biosynthesis. Functionally, catalyzes the formation of UDP-glucose from glucose-1-phosphate and UTP. This is an intermediate step in the biosynthesis of diglucosyl-diacylglycerol (Glc2-DAG), i.e. a glycolipid found in the membrane, which is also used as a membrane anchor for lipoteichoic acid (LTA). This Staphylococcus haemolyticus (strain JCSC1435) protein is UTP--glucose-1-phosphate uridylyltransferase (gtaB).